We begin with the raw amino-acid sequence, 457 residues long: UDP-glycosyltransferase 74C1 (457 aa).

UDP-alpha-D-glucose is bound by residues threonine 281, 336-338, 353-361, and 375-378; these read VPQ, HCGWNSTLE, and WTDQ.

It belongs to the UDP-glycosyltransferase family.

The chain is UDP-glycosyltransferase 74C1 (UGT74C1) from Arabidopsis thaliana (Mouse-ear cress).